Here is a 429-residue protein sequence, read N- to C-terminus: Xaa-Pro dipeptidase (429 aa).

Mn(2+)-binding residues include Asp241, Asp252, His334, Glu372, and Glu411.

This sequence belongs to the peptidase M24B family. Bacterial-type prolidase subfamily. Mn(2+) serves as cofactor.

The enzyme catalyses Xaa-L-Pro dipeptide + H2O = an L-alpha-amino acid + L-proline. Its function is as follows. Splits dipeptides with a prolyl residue in the C-terminal position. The protein is Xaa-Pro dipeptidase of Marinobacter nauticus (strain ATCC 700491 / DSM 11845 / VT8) (Marinobacter aquaeolei).